The following is a 74-amino-acid chain: Kappa-scoloptoxin(07)-Ssm2e (74 aa).

The N-terminal stretch at 1 to 19 (MLVFYALLFVSVFSNTVMG) is a signal peptide. A propeptide spanning residues 20–41 (ATIDMPIPKPILREAIEEIDVN) is cleaved from the precursor.

Belongs to the scoloptoxin-07 family. Contains 3 disulfide bonds. In terms of tissue distribution, expressed by the venom gland.

The protein localises to the secreted. Inhibits voltage-gated potassium channels. In Scolopendra mutilans (Chinese red-headed centipede), this protein is Kappa-scoloptoxin(07)-Ssm2e.